The primary structure comprises 865 residues: Alanine--tRNA ligase (865 aa).

Positions 554, 558, 656, and 660 each coordinate Zn(2+).

It belongs to the class-II aminoacyl-tRNA synthetase family. It depends on Zn(2+) as a cofactor.

The protein localises to the cytoplasm. The enzyme catalyses tRNA(Ala) + L-alanine + ATP = L-alanyl-tRNA(Ala) + AMP + diphosphate. Functionally, catalyzes the attachment of alanine to tRNA(Ala) in a two-step reaction: alanine is first activated by ATP to form Ala-AMP and then transferred to the acceptor end of tRNA(Ala). Also edits incorrectly charged Ser-tRNA(Ala) and Gly-tRNA(Ala) via its editing domain. The protein is Alanine--tRNA ligase of Idiomarina loihiensis (strain ATCC BAA-735 / DSM 15497 / L2-TR).